The sequence spans 1048 residues: Dyslexia-associated protein KIAA0319-like protein (1048 aa).

Topologically, residues 1-29 (MEKRLGVKPSPASWVLPGYCWQTSVKLPR) are cytoplasmic. Residues 30-50 (SLYLLYSFFCFSVLWLSTDAD) form a helical membrane-spanning segment. Residues 49–127 (ADESRCQQGK…PFRTDSSNSM (79 aa)) form the MANSC domain. The Extracellular portion of the chain corresponds to 51 to 928 (ESRCQQGKTL…RDGDSNCEWS (878 aa)). 2 disordered regions span residues 198 to 218 (HGAMQHSKVNHSEEAGALSPT) and 231 to 300 (SFTS…STSA). Residues 231–241 (SFTSNHTTQTP) are compositionally biased toward polar residues. A glycan (N-linked (GlcNAc...) asparagine) is linked at Asn-246. Composition is skewed to low complexity over residues 247 to 261 (VSIHPEPSEHSSPVS) and 287 to 300 (ATPTPQASSQSTSA). PKD domains follow at residues 309–400 (VVSA…VKPE), 408–497 (VAVV…VNKA), 503–593 (VANA…VQPE), 599–687 (QADA…VKEE), and 693–784 (VAKI…VKPD). The N-linked (GlcNAc...) asparagine glycan is linked to Asn-394. A disordered region spans residues 593–623 (ENNKPPQADAGPDKELTLPVDSTTLDGSKST). A helical membrane pass occupies residues 929-949 (VLYVIIASFVIVVALGILSWT). Over 950 to 1048 (TICCCKRQKG…KSRSAREEIL (99 aa)) the chain is Cytoplasmic. Phosphothreonine is present on Thr-973. Ser-977 bears the Phosphoserine mark. The tract at residues 980–1007 (LKPTSRAGSKQKGPTLSSSLMHSESELD) is disordered. The segment covering 985–994 (RAGSKQKGPT) has biased composition (polar residues). Residues Ser-1008 and Ser-1030 each carry the phosphoserine modification. The disordered stretch occupies residues 1024–1048 (LYGQNGSVPNGQTPLKSRSAREEIL). Residues 1027 to 1039 (QNGSVPNGQTPLK) are compositionally biased toward polar residues. Thr-1036 carries the post-translational modification Phosphothreonine.

Interacts with RTN4R. In terms of processing, N-glycosylated.

It localises to the cytoplasmic granule membrane. Its subcellular location is the golgi apparatus membrane. The protein localises to the golgi apparatus. The protein resides in the trans-Golgi network membrane. It is found in the cell membrane. Functionally, possible role in axon guidance through interaction with RTN4R. (Microbial infection) Acts as a receptor for adeno-associated virus and is involved in adeno-associated virus infection through endocytosis system. The sequence is that of Dyslexia-associated protein KIAA0319-like protein from Mus musculus (Mouse).